The sequence spans 379 residues: Queuine tRNA-ribosyltransferase (379 aa).

Catalysis depends on aspartate 94, which acts as the Proton acceptor. Substrate is bound by residues 94 to 98 (DSGGF), aspartate 148, glutamine 191, and glycine 218. An RNA binding region spans residues 249–255 (GVGSPDA). The active-site Nucleophile is aspartate 268. The tract at residues 273–277 (TRIAR) is RNA binding; important for wobble base 34 recognition. The Zn(2+) site is built by cysteine 306, cysteine 308, cysteine 311, and histidine 337.

The protein belongs to the queuine tRNA-ribosyltransferase family. Homodimer. Within each dimer, one monomer is responsible for RNA recognition and catalysis, while the other monomer binds to the replacement base PreQ1. The cofactor is Zn(2+).

It carries out the reaction 7-aminomethyl-7-carbaguanine + guanosine(34) in tRNA = 7-aminomethyl-7-carbaguanosine(34) in tRNA + guanine. It participates in tRNA modification; tRNA-queuosine biosynthesis. Functionally, catalyzes the base-exchange of a guanine (G) residue with the queuine precursor 7-aminomethyl-7-deazaguanine (PreQ1) at position 34 (anticodon wobble position) in tRNAs with GU(N) anticodons (tRNA-Asp, -Asn, -His and -Tyr). Catalysis occurs through a double-displacement mechanism. The nucleophile active site attacks the C1' of nucleotide 34 to detach the guanine base from the RNA, forming a covalent enzyme-RNA intermediate. The proton acceptor active site deprotonates the incoming PreQ1, allowing a nucleophilic attack on the C1' of the ribose to form the product. After dissociation, two additional enzymatic reactions on the tRNA convert PreQ1 to queuine (Q), resulting in the hypermodified nucleoside queuosine (7-(((4,5-cis-dihydroxy-2-cyclopenten-1-yl)amino)methyl)-7-deazaguanosine). The chain is Queuine tRNA-ribosyltransferase from Staphylococcus haemolyticus (strain JCSC1435).